A 196-amino-acid chain; its full sequence is FMN-dependent NADH:quinone oxidoreductase (196 aa).

Ser10 serves as a coordination point for FMN.

It belongs to the azoreductase type 1 family. Homodimer. FMN is required as a cofactor.

It catalyses the reaction 2 a quinone + NADH + H(+) = 2 a 1,4-benzosemiquinone + NAD(+). It carries out the reaction N,N-dimethyl-1,4-phenylenediamine + anthranilate + 2 NAD(+) = 2-(4-dimethylaminophenyl)diazenylbenzoate + 2 NADH + 2 H(+). Quinone reductase that provides resistance to thiol-specific stress caused by electrophilic quinones. In terms of biological role, also exhibits azoreductase activity. Catalyzes the reductive cleavage of the azo bond in aromatic azo compounds to the corresponding amines. This chain is FMN-dependent NADH:quinone oxidoreductase, found in Cereibacter sphaeroides (strain ATCC 17023 / DSM 158 / JCM 6121 / CCUG 31486 / LMG 2827 / NBRC 12203 / NCIMB 8253 / ATH 2.4.1.) (Rhodobacter sphaeroides).